We begin with the raw amino-acid sequence, 137 residues long: UPF0148 protein MJ0890 (137 aa).

It belongs to the UPF0148 family.

This chain is UPF0148 protein MJ0890, found in Methanocaldococcus jannaschii (strain ATCC 43067 / DSM 2661 / JAL-1 / JCM 10045 / NBRC 100440) (Methanococcus jannaschii).